Here is an 89-residue protein sequence, read N- to C-terminus: Small ribosomal subunit protein uS15 (89 aa).

It belongs to the universal ribosomal protein uS15 family. Part of the 30S ribosomal subunit. Forms a bridge to the 50S subunit in the 70S ribosome, contacting the 23S rRNA.

Functionally, one of the primary rRNA binding proteins, it binds directly to 16S rRNA where it helps nucleate assembly of the platform of the 30S subunit by binding and bridging several RNA helices of the 16S rRNA. Forms an intersubunit bridge (bridge B4) with the 23S rRNA of the 50S subunit in the ribosome. The chain is Small ribosomal subunit protein uS15 from Acidothermus cellulolyticus (strain ATCC 43068 / DSM 8971 / 11B).